A 159-amino-acid chain; its full sequence is Globin-like protein (159 aa).

The region spanning methionine 1–lysine 152 is the Globin domain. Histidine 101 contributes to the heme binding site.

The protein belongs to the globin family. In terms of assembly, homodimer. In terms of tissue distribution, expressed mainly in a subset of neuronal cells and in head muscular tissue.

The protein localises to the cytoplasm. Functionally, may be a globin and may play a role in oxygen transport. The polypeptide is Globin-like protein (glb-1) (Caenorhabditis elegans).